Consider the following 947-residue polypeptide: MPSLSLSKLLRVGEGRMVKRLKHIAEHVESLSPDVEGLTDEQLKAKTTEFRERYAAGETLDELLPEAFSVAREASWRVIDQKHFHVQIMGGAALHFGNVAEMKTGEGKTLTCVLPAYLNAIAGDGVHVVTVNDYLAKRDSEWMGRVHRALGLETSVILSGMTPAERRVAYAADITYGTNNEFGFDYLRDNMTHSLDDLVQRGHAFAIVDEVDSILIDEARTPLIISGPADGSSKWYSEFARIAPLLKKDVHYEVDIRKRTIGVHEAGVELVEDQLGIDNLYEAANSPLVSYLNNAIKAKELYTKDKDYIVRDGEVIIVDEFTGRVLVGRRYNEGMHQAIEAKEKVEIKAENQTLATITLQNYFRLYDKLSGMTGTAETEAAELHQTYTLGVIPIPTNRPMVRVDNGDLIYKTEEAKFDAVVDDVVERHENGQPVLIGTTSVERSEYLSKQFTKRGVAHNVLNAKFHEKEATIIAEAGRSGAVTVATNMAGRGTDVVLGGNPDIIADIALRKKGLDPVTTPDEYEAAWDAVLDEVKAEVKADAEKVRDAGGLYVLGTERHESRRIDNQLRGRSGRQGDPGESRFYLSLGDELMRRFNGSALESIMTRLNLPDDVPIEAKMVSKAIKSAQTQVEQQNFEIRKNVLKYDEVMNQQRTVIYKERRQILEGEDMEGQVEQMITDVVTAYVDGATAEGYVEDWDLEQLWTALKTLYPVGIDHKTLAGEDGAGINSDLSRDDLRTALLEDAHAAYKKREAEIDAIAGENGMRELERRVFLSVLDRKWREHLYEMDYLKEGIGLRAMAQRDPLVEYQREGYDMFIGMLDGLKEESVGFLFNLQVEAAPAQPASGISVTAGSAAAASATAPKPLPTQEAAARTTGTAAPTALRAKGLDDEGPSRLTYTGPDEDGKAKATRDSAADSGDGAASRRERREAARTQSKSNRAPKSKRKR.

Residues Gln87, 105–109 (GEGKT), and Asp494 each bind ATP. The segment at 860 to 947 (TAPKPLPTQE…NRAPKSKRKR (88 aa)) is disordered. Positions 870 to 885 (AAARTTGTAAPTALRA) are enriched in low complexity. Basic and acidic residues-rich tracts occupy residues 903 to 914 (EDGKAKATRDSA) and 922 to 931 (ASRRERREAA).

It belongs to the SecA family. Monomer and homodimer. Part of the essential Sec protein translocation apparatus which comprises SecA, SecYEG and auxiliary proteins SecDF. Other proteins may also be involved.

Its subcellular location is the cell membrane. The protein localises to the cytoplasm. It carries out the reaction ATP + H2O + cellular proteinSide 1 = ADP + phosphate + cellular proteinSide 2.. Functionally, part of the Sec protein translocase complex. Interacts with the SecYEG preprotein conducting channel. Has a central role in coupling the hydrolysis of ATP to the transfer of proteins into and across the cell membrane, serving as an ATP-driven molecular motor driving the stepwise translocation of polypeptide chains across the membrane. In Rhodococcus erythropolis (strain PR4 / NBRC 100887), this protein is Protein translocase subunit SecA.